A 1394-amino-acid polypeptide reads, in one-letter code: ABC transporter patM (1394 aa).

A disordered region spans residues 1–41; the sequence is MVDNYHSSLDVAKTPIQSDADAQKSEAETEGPSSKSSQIAA. Residues 98-341 enclose the ABC transporter 1 domain; that stretch reads SPLQNRQRKQ…FEDLGFECLS (244 aa). A run of 6 helical transmembrane segments spans residues 437–457, 467–487, 511–531, 546–566, 579–599, and 688–708; these read SLWA…GTLF, LFIF…QSMA, IAYA…AICY, GNFF…SMFF, AVLP…LYVP, and VGIN…GMEM. The tract at residues 727-755 is disordered; sequence VTHRRDKIDSETGQDQGNESSEMSAGQSN. A compositionally biased stretch (polar residues) spans 737-755; that stretch reads ETGQDQGNESSEMSAGQSN. In terms of domain architecture, ABC transporter 2 spans 767-1013; it reads DKSHNLAWTN…EAIQYFQPRS (247 aa). An ATP-binding site is contributed by 808-815; it reads GVSGAGKT. 6 consecutive transmembrane segments (helical) span residues 1131 to 1151, 1177 to 1197, 1219 to 1239, 1245 to 1265, 1280 to 1300, and 1368 to 1388; these read GAYN…PLGL, LAFV…SSLV, FLMY…CASL, AAFA…GTLS, ISPL…DLPI, and IGVF…MTYL.

The protein belongs to the ABC transporter superfamily. ABCG family. PDR (TC 3.A.1.205) subfamily.

Its subcellular location is the vacuole membrane. The protein localises to the cell membrane. It participates in mycotoxin biosynthesis; patulin biosynthesis. Functionally, ABC transporter; part of the gene cluster that mediates the biosynthesis of patulin, an acetate-derived tetraketide mycotoxin produced by several fungal species that shows antimicrobial properties against several bacteria. May be involved in the secretion of E-ascladiol to be converted to patulin by the secreted patulin synthase patE. The sequence is that of ABC transporter patM from Penicillium expansum (Blue mold rot fungus).